The chain runs to 130 residues: Small ribosomal subunit protein uS9 (130 aa).

Belongs to the universal ribosomal protein uS9 family.

This Caldicellulosiruptor bescii (strain ATCC BAA-1888 / DSM 6725 / KCTC 15123 / Z-1320) (Anaerocellum thermophilum) protein is Small ribosomal subunit protein uS9.